Here is a 386-residue protein sequence, read N- to C-terminus: Mannitol-1-phosphate 5-dehydrogenase (386 aa).

Ala4 to Gly15 provides a ligand contact to NAD(+).

This sequence belongs to the mannitol dehydrogenase family.

The catalysed reaction is D-mannitol 1-phosphate + NAD(+) = beta-D-fructose 6-phosphate + NADH + H(+). This chain is Mannitol-1-phosphate 5-dehydrogenase, found in Caldanaerobacter subterraneus subsp. tengcongensis (strain DSM 15242 / JCM 11007 / NBRC 100824 / MB4) (Thermoanaerobacter tengcongensis).